The following is a 612-amino-acid chain: MPDYRSKTSTHGRNMAGARALWRATGMKDEDFKKPIIAIANSFTQFVPGHVHLKDLGQLVAREIEKAGGVAKEFNTIAVDDGIAMGHDGMLYSLPSREIIADSVEYMVNAHCADAIVCISNCDKITPGMLMAALRLNIPVVFVSGGPMEAGKTKLASHGLDLVDAMVVAADDSCSDEKVAEYERSACPTCGSCSGMFTANSMNCLTEALGLSLPGNGSTLATHADREQLFLRAGRLAVELCQRYYGEGDDSVLPRNIANFKAFENAMTLDIAMGGSTNTILHLLAAAQEAEVPFDLRDIDRLSRKVPQLCKVAPNIQKYHMEDVHRAGGIFSILGELARGGLLHTDVATVHSPSMADAIARWDITQTRDEAVHTFFKAGPAGIPTQTAFSQNTRWPSLDDDRAEGCIRSVEHAYSKEGGLAVLYGNIALDGCVVKTAGVDESIHVFEGRAKIFESQDAAVKGILGDEVKAGDIVIIRYEGPKGGPGMQEMLYPTSYLKSKGLGKQCALLTDGRFSGGTSGLSIGHASPEAAAGGAIGLVQDGDKVLIDIPNRSINLLVSDEELAARRAEQDRKGWKPAAPRARRVSTALKAYALLATSADKGAVRNKALLDG.

Aspartate 81 lines the Mg(2+) pocket. Residue cysteine 122 coordinates [2Fe-2S] cluster. 2 residues coordinate Mg(2+): aspartate 123 and lysine 124. Lysine 124 is modified (N6-carboxylysine). Cysteine 193 is a [2Fe-2S] cluster binding site. Residue glutamate 489 participates in Mg(2+) binding. The active-site Proton acceptor is serine 515.

This sequence belongs to the IlvD/Edd family. As to quaternary structure, homodimer. It depends on [2Fe-2S] cluster as a cofactor. Mg(2+) is required as a cofactor.

The enzyme catalyses (2R)-2,3-dihydroxy-3-methylbutanoate = 3-methyl-2-oxobutanoate + H2O. The catalysed reaction is (2R,3R)-2,3-dihydroxy-3-methylpentanoate = (S)-3-methyl-2-oxopentanoate + H2O. It functions in the pathway amino-acid biosynthesis; L-isoleucine biosynthesis; L-isoleucine from 2-oxobutanoate: step 3/4. The protein operates within amino-acid biosynthesis; L-valine biosynthesis; L-valine from pyruvate: step 3/4. Functions in the biosynthesis of branched-chain amino acids. Catalyzes the dehydration of (2R,3R)-2,3-dihydroxy-3-methylpentanoate (2,3-dihydroxy-3-methylvalerate) into 2-oxo-3-methylpentanoate (2-oxo-3-methylvalerate) and of (2R)-2,3-dihydroxy-3-methylbutanoate (2,3-dihydroxyisovalerate) into 2-oxo-3-methylbutanoate (2-oxoisovalerate), the penultimate precursor to L-isoleucine and L-valine, respectively. The chain is Dihydroxy-acid dehydratase from Pseudomonas paraeruginosa (strain DSM 24068 / PA7) (Pseudomonas aeruginosa (strain PA7)).